The primary structure comprises 215 residues: MSENSNHHCIIVGIAGASASGKSLIASTIYNELRAKVGDHQIGVITEDSYYKDQSHLTMEERVKTNYDHPNALDHELLCEHLEQLMRGEAVNIPTYSYTEHTRTSEVDVMTPKKVIILEGILLLTDPRLRNLMHASVFMDTPLDICLLRRARRDVEERGRTMESVFEQYQKTVRPMFMQFIDPSKQHADIIVPRGGKNRIAIDVLKAHISRLLKA.

16–23 (GASASGKS) serves as a coordination point for ATP.

This sequence belongs to the uridine kinase family.

The protein resides in the cytoplasm. It carries out the reaction uridine + ATP = UMP + ADP + H(+). It catalyses the reaction cytidine + ATP = CMP + ADP + H(+). The protein operates within pyrimidine metabolism; CTP biosynthesis via salvage pathway; CTP from cytidine: step 1/3. Its pathway is pyrimidine metabolism; UMP biosynthesis via salvage pathway; UMP from uridine: step 1/1. The chain is Uridine kinase from Aliivibrio fischeri (strain ATCC 700601 / ES114) (Vibrio fischeri).